The sequence spans 45 residues: Large ribosomal subunit protein bL34 (45 aa).

Residues 1–45 (MTKRTFGGTSRKRKRVSGFRVRMRSHTGRRVIKSRRQKGRERIAV) are disordered. Over residues 10–39 (SRKRKRVSGFRVRMRSHTGRRVIKSRRQKG) the composition is skewed to basic residues.

It belongs to the bacterial ribosomal protein bL34 family.

This chain is Large ribosomal subunit protein bL34, found in Prochlorococcus marinus (strain MIT 9301).